We begin with the raw amino-acid sequence, 383 residues long: L-lactate dehydrogenase (383 aa).

One can recognise an FMN hydroxy acid dehydrogenase domain in the interval 1–380 (MIISSTFDYR…THESLASTDA (380 aa)). Residue tyrosine 24 participates in substrate binding. The FMN site is built by serine 106 and glutamine 127. Residue tyrosine 129 coordinates substrate. Threonine 155 provides a ligand contact to FMN. Arginine 164 lines the substrate pocket. Lysine 251 contributes to the FMN binding site. The Proton acceptor role is filled by histidine 275. A substrate-binding site is contributed by arginine 278. An FMN-binding site is contributed by 306 to 330 (DSGVRSGLDVVRMIAQGADAVMIGR).

Belongs to the FMN-dependent alpha-hydroxy acid dehydrogenase family. It depends on FMN as a cofactor.

The protein resides in the cell inner membrane. The enzyme catalyses (S)-lactate + A = pyruvate + AH2. In terms of biological role, catalyzes the conversion of L-lactate to pyruvate. Is coupled to the respiratory chain. The protein is L-lactate dehydrogenase of Bartonella quintana (strain Toulouse) (Rochalimaea quintana).